The chain runs to 288 residues: Protein-S-isoprenylcysteine O-methyltransferase (288 aa).

The helical transmembrane segment at 13 to 29 (SIVSFTLGASVISLPLL) threads the bilayer. Residues 30-45 (TSSFTEQTLLAAAPGR) are Lumenal-facing. A helical membrane pass occupies residues 46–63 (IALVFFIAALNGLLLLLY). At 64-73 (KAQLYQVAIR) the chain is on the cytoplasmic side. Residues 74-91 (ASFLGFAFGCGLLLSITQ) form a helical membrane-spanning segment. Over 92–96 (SPWKP) the chain is Lumenal. A helical transmembrane segment spans residues 97–116 (FGWYVCSLSFFHYSEYLVTA). Topologically, residues 117 to 135 (MNNPRSLSIDSFLLNHSLE) are cytoplasmic. Residues 136–153 (YTLAALSSWVEFTIETTI) traverse the membrane as a helical segment. Residues 154–158 (YPDLK) lie on the Lumenal side of the membrane. Residues 159 to 178 (QITWLSVIGLIMVLFGEVLR) traverse the membrane as a helical segment. Over 179–216 (KCAMLTAGSNFNHIVQNEKSDSHTLVTSGVYSWFRHPS) the chain is Cytoplasmic. Residues glutamine 194, 201 to 204 (HTLV), tyrosine 209, and 214 to 217 (HPSY) each bind S-adenosyl-L-methionine. The chain crosses the membrane as a helical span at residues 217–232 (YVGWFYWSIGTQVLLC). Residue asparagine 233 is a topological domain, lumenal. The helical transmembrane segment at 234-248 (PLCLVGYTLASWRFF) threads the bilayer. Residues 249–288 (SERIEEEEFSLIHFFGENYLEYKKKVPTGLPFIKGVKMEP) are Cytoplasmic-facing. Position 251 (arginine 251) interacts with substrate. Position 255 (glutamate 255) interacts with S-adenosyl-L-methionine.

This sequence belongs to the class VI-like SAM-binding methyltransferase superfamily. Isoprenylcysteine carboxyl methyltransferase family.

It localises to the endoplasmic reticulum membrane. It catalyses the reaction [protein]-C-terminal S-[(2E,6E)-farnesyl]-L-cysteine + S-adenosyl-L-methionine = [protein]-C-terminal S-[(2E,6E)-farnesyl]-L-cysteine methyl ester + S-adenosyl-L-homocysteine. Its function is as follows. Catalyzes the post-translational methylation of isoprenylated C-terminal cysteine residues. In Xenopus laevis (African clawed frog), this protein is Protein-S-isoprenylcysteine O-methyltransferase (icmt).